Here is a 970-residue protein sequence, read N- to C-terminus: Bifunctional glutamine synthetase adenylyltransferase/adenylyl-removing enzyme (970 aa).

Residues 1–454 (MNSLPPRPSL…HFQQVFAAPQ (454 aa)) are adenylyl removase. Positions 468–970 (QAVLASIWAG…WRRVMEEGKA (503 aa)) are adenylyl transferase.

This sequence belongs to the GlnE family. It depends on Mg(2+) as a cofactor.

It catalyses the reaction [glutamine synthetase]-O(4)-(5'-adenylyl)-L-tyrosine + phosphate = [glutamine synthetase]-L-tyrosine + ADP. It carries out the reaction [glutamine synthetase]-L-tyrosine + ATP = [glutamine synthetase]-O(4)-(5'-adenylyl)-L-tyrosine + diphosphate. In terms of biological role, involved in the regulation of glutamine synthetase GlnA, a key enzyme in the process to assimilate ammonia. When cellular nitrogen levels are high, the C-terminal adenylyl transferase (AT) inactivates GlnA by covalent transfer of an adenylyl group from ATP to specific tyrosine residue of GlnA, thus reducing its activity. Conversely, when nitrogen levels are low, the N-terminal adenylyl removase (AR) activates GlnA by removing the adenylyl group by phosphorolysis, increasing its activity. The regulatory region of GlnE binds the signal transduction protein PII (GlnB) which indicates the nitrogen status of the cell. The protein is Bifunctional glutamine synthetase adenylyltransferase/adenylyl-removing enzyme of Thioalkalivibrio sulfidiphilus (strain HL-EbGR7).